The sequence spans 60 residues: Metallothionein (60 aa).

Residues 1–28 (MDPCDCSKTGKCNCGGSCTCTNCSCTSC) are beta. Residues Cys-4, Cys-6, Cys-12, Cys-14, Cys-18, Cys-20, Cys-23, Cys-25, Cys-28, Cys-32, Cys-33, Cys-35, Cys-36, Cys-40, Cys-43, Cys-47, Cys-49, Cys-54, Cys-58, and Cys-59 each contribute to the a divalent metal cation site. The alpha stretch occupies residues 29–60 (KKSCCACCPSGCTKCASGCVCKGKTCDTTCCQ).

The protein belongs to the metallothionein superfamily. Type 1 family.

In terms of biological role, metallothioneins have a high content of cysteine residues that bind various heavy metals. The polypeptide is Metallothionein (mt) (Oryzias latipes (Japanese rice fish)).